Consider the following 78-residue polypeptide: Conotoxin CaFr179 (78 aa).

Residues 1-19 form the signal peptide; it reads MSGLGIMVLTLLLLVFMEA. A propeptide spanning residues 20 to 44 is cleaved from the precursor; sequence SHQDAGEKQATQRDAINVRRRRSLA. Disulfide bonds link Cys-52-Cys-64, Cys-56-Cys-72, and Cys-63-Cys-76. Position 77 is a phenylalanine amide (Phe-77).

The protein belongs to the conotoxin O3 superfamily. Expressed by the venom duct.

The protein localises to the secreted. The protein is Conotoxin CaFr179 of Conus caracteristicus (Characteristic cone).